A 68-amino-acid chain; its full sequence is Basic phospholipase A2 homolog BdipTx-I (68 aa).

Cys28 and Cys44 are oxidised to a cystine.

The protein belongs to the phospholipase A2 family. Group II subfamily. K49 sub-subfamily. As to expression, expressed by the venom gland.

Its subcellular location is the secreted. Functionally, snake venom phospholipase A2 (PLA2) that lacks enzymatic activity. Is myotoxic, induces edema, and causes systemic effects (renal changes that lead to proteinuria) on mice. A model of myotoxic mechanism has been proposed: an apo Lys49-PLA2 is activated by the entrance of a hydrophobic molecule (e.g. fatty acid) at the hydrophobic channel of the protein leading to a reorientation of a monomer. This reorientation causes a transition between 'inactive' to 'active' states, causing alignment of C-terminal and membrane-docking sites (MDoS) side-by-side and putting the membrane-disruption sites (MDiS) in the same plane, exposed to solvent and in a symmetric position for both monomers. The MDoS region stabilizes the toxin on membrane by the interaction of charged residues with phospholipid head groups. Subsequently, the MDiS region destabilizes the membrane with penetration of hydrophobic residues. This insertion causes a disorganization of the membrane, allowing an uncontrolled influx of ions (i.e. calcium and sodium), and eventually triggering irreversible intracellular alterations and cell death. The chain is Basic phospholipase A2 homolog BdipTx-I from Bothrops diporus (Chaco lancehead).